The following is a 172-amino-acid chain: Adenine phosphoribosyltransferase (172 aa).

It belongs to the purine/pyrimidine phosphoribosyltransferase family. In terms of assembly, homodimer.

The protein resides in the cytoplasm. It carries out the reaction AMP + diphosphate = 5-phospho-alpha-D-ribose 1-diphosphate + adenine. Its pathway is purine metabolism; AMP biosynthesis via salvage pathway; AMP from adenine: step 1/1. Functionally, catalyzes a salvage reaction resulting in the formation of AMP, that is energically less costly than de novo synthesis. This is Adenine phosphoribosyltransferase from Synechococcus sp. (strain CC9605).